The primary structure comprises 361 residues: MSDAIRPQPGILDIALYEGGKSHVAGIQNALKLSSNENPFGPSPKAKEAFLRSVHTLHRYPSTDHAGLRHAIAEVHGLDPARVICGVGSDEIITFLCQAYAGPHTDVVFTEHGFLMYRISALAVGANPVEVPERERTTDVDAILAACTPHTRLVFLANPNNPTGTMIGQADLARLAAGLPAQAILVLDGAYAEYVPGYDAGLALIEERGNVVMTRTFSKIYGLGGLRVGWGYGPKSIIDVLNRIRGPFNLSTTQLETAEAAVRDQDHVARCRADNARWRIWLAEALAEIGVPSDTSMANFILARFSDTEEAEACDLHLQTQGLIVRRVAGYKLPHCLRITIGDEASCRRVAHAIGQFKRMR.

At K219 the chain carries N6-(pyridoxal phosphate)lysine.

Belongs to the class-II pyridoxal-phosphate-dependent aminotransferase family. Histidinol-phosphate aminotransferase subfamily. In terms of assembly, homodimer. The cofactor is pyridoxal 5'-phosphate.

It carries out the reaction L-histidinol phosphate + 2-oxoglutarate = 3-(imidazol-4-yl)-2-oxopropyl phosphate + L-glutamate. Its pathway is amino-acid biosynthesis; L-histidine biosynthesis; L-histidine from 5-phospho-alpha-D-ribose 1-diphosphate: step 7/9. The sequence is that of Histidinol-phosphate aminotransferase from Cereibacter sphaeroides (strain KD131 / KCTC 12085) (Rhodobacter sphaeroides).